Here is a 159-residue protein sequence, read N- to C-terminus: Galactose-specific lectin nattectin (159 aa).

An N-terminal signal peptide occupies residues 1–21 (MASVPHFTVFLFLACALGIGA). Residues 22–24 (NVT) constitute a propeptide that is removed on maturation. Disulfide bonds link Cys-31–Cys-42, Cys-59–Cys-155, and Cys-132–Cys-147. In terms of domain architecture, C-type lectin spans 38 to 156 (HGSRCFTFHR…CKVKRSFLCA (119 aa)). Ca(2+) contacts are provided by Gln-122, Asp-124, Glu-130, and Asn-143. Positions 122–124 (QPD) match the Galactose-binding motif.

As to quaternary structure, monomer. Post-translationally, not glycosylated. As to expression, expressed by the venom gland.

It localises to the secreted. Functionally, galactose specific lectin that exhibits hemagglutination activity (minimum hemagluttination concentration = 2.5 ug/well) in a calcium-independent fashion. Has remarkable pro-inflammatory activity, inducing neutrophil mobilization in mice. Plays a crucial role in the innate immune system and chronic manifestations, especially in neutrophil mobilization. This chain is Galactose-specific lectin nattectin, found in Thalassophryne nattereri (Copper Joe toadfish).